We begin with the raw amino-acid sequence, 890 residues long: MLINWFKLISPKNRILKRATLAAKQVDALKDEMRALSDEQLFNKTEYFINELKNNKTTDDILVEAFAVIREVVYRETGNFAYLVQLIGAYVVHQGDFSEMMTGEGKTLTLVLAAYLNMLEKKGVHIVTVNEYLAERDAEQARRIFARLNLTVGCNKANLAPHLKKEAFDCDLTYTTNSELGFDYLRDNMVRNYRDKKIRGLHFAIVDEGDSILIDEARTPLIISGQPKKDFRMYFDADKFVETLSESDYKIDPESRSPSLTEKGITKAEKHFKINNLFDLENSDLFHKIGNALTARKIFQNGKEYIVRDDKILIVDHFTGRILEGRSYNGGLHQAVQAKERVPIEAENVVVATVTYQSFFRMYKKLAAVSGTALTESEEFLKIYNMVVVPVPTNRPVIRKDHPDFMFGNLKTKWEAVVNEIEKIHKTGQPILVGTGSVEDSETLHQMLLEKNIMHEVLNAKNHAREAHIIAKAGEVGSVTISTNMAGRGTDIKLGKGAKELGGLYVIGTERHESRRIDNQLRGRSGRQGDIGESRFFISFGDPLFKRFAQDRILKAQEKLASDYFDSKFFSRFLTMTQKKVESVNFDMRKNLIDYDHVLANQRELIYKQRDKILIASDLTEVVDRMAQNFVEGFVETFKDQANQTMVNPIELSIAVQKELLQGEEVTASQFYNQTLLAAKQTVLKLVKDAISKKIEVMTVGIANNVFRDIIIQQMDDAWIHHLDQMLKLREGVSLRSLEQTSPLNIYVEESKKLFDLMLNKIAKNVILAVCAIINPTRNVDINVEQEHRRLEALKRLEEIKKLEELQNNNNEPAKVLFKFPDQHGNMIEREVPVDNLIQLVDGQIIQAQVAEEPKQELNQLEKADQLDQTLIEAKLAEQQEQKNNSATDK.

Residues glutamine 85, 103-107 (GEGKT), and aspartate 491 each bind ATP.

The protein belongs to the SecA family. Monomer and homodimer. Part of the essential Sec protein translocation apparatus which comprises SecA, SecYEG and auxiliary proteins SecDF. Other proteins may also be involved.

The protein resides in the cell membrane. It localises to the cytoplasm. The enzyme catalyses ATP + H2O + cellular proteinSide 1 = ADP + phosphate + cellular proteinSide 2.. In terms of biological role, part of the Sec protein translocase complex. Interacts with the SecYEG preprotein conducting channel. Has a central role in coupling the hydrolysis of ATP to the transfer of proteins into and across the cell membrane, serving as an ATP-driven molecular motor driving the stepwise translocation of polypeptide chains across the membrane. In Mycoplasmoides gallisepticum (strain R(low / passage 15 / clone 2)) (Mycoplasma gallisepticum), this protein is Protein translocase subunit SecA.